A 475-amino-acid chain; its full sequence is Bifunctional protein HldE (475 aa).

The interval 1–318 is ribokinase; sequence MKITLPEFEK…ANALYTEQET (318 aa). Residue 195 to 198 coordinates ATP; sequence NMSE. Asp-264 is an active-site residue. The interval 344 to 475 is cytidylyltransferase; the sequence is MTNGCFDILH…DIIKTIRERG (132 aa).

The protein in the N-terminal section; belongs to the carbohydrate kinase PfkB family. It in the C-terminal section; belongs to the cytidylyltransferase family. Homodimer.

The enzyme catalyses D-glycero-beta-D-manno-heptose 7-phosphate + ATP = D-glycero-beta-D-manno-heptose 1,7-bisphosphate + ADP + H(+). It catalyses the reaction D-glycero-beta-D-manno-heptose 1-phosphate + ATP + H(+) = ADP-D-glycero-beta-D-manno-heptose + diphosphate. The protein operates within nucleotide-sugar biosynthesis; ADP-L-glycero-beta-D-manno-heptose biosynthesis; ADP-L-glycero-beta-D-manno-heptose from D-glycero-beta-D-manno-heptose 7-phosphate: step 1/4. It functions in the pathway nucleotide-sugar biosynthesis; ADP-L-glycero-beta-D-manno-heptose biosynthesis; ADP-L-glycero-beta-D-manno-heptose from D-glycero-beta-D-manno-heptose 7-phosphate: step 3/4. Functionally, catalyzes the phosphorylation of D-glycero-D-manno-heptose 7-phosphate at the C-1 position to selectively form D-glycero-beta-D-manno-heptose-1,7-bisphosphate. Its function is as follows. Catalyzes the ADP transfer from ATP to D-glycero-beta-D-manno-heptose 1-phosphate, yielding ADP-D-glycero-beta-D-manno-heptose. The chain is Bifunctional protein HldE from Aeromonas hydrophila subsp. hydrophila (strain ATCC 7966 / DSM 30187 / BCRC 13018 / CCUG 14551 / JCM 1027 / KCTC 2358 / NCIMB 9240 / NCTC 8049).